Consider the following 272-residue polypeptide: ATP synthase subunit a (272 aa).

Helical transmembrane passes span 39 to 59 (GFWA…LIFI), 103 to 123 (VAPL…LKWI), 124 to 144 (PVDY…KIVP), 152 to 172 (FGIS…VKGV), 181 to 201 (FTPF…IIGL), 221 to 241 (VVFI…NVPW), and 242 to 262 (AIFH…LTVV).

Belongs to the ATPase A chain family. F-type ATPases have 2 components, CF(1) - the catalytic core - and CF(0) - the membrane proton channel. CF(1) has five subunits: alpha(3), beta(3), gamma(1), delta(1), epsilon(1). CF(0) has three main subunits: a(1), b(2) and c(9-12). The alpha and beta chains form an alternating ring which encloses part of the gamma chain. CF(1) is attached to CF(0) by a central stalk formed by the gamma and epsilon chains, while a peripheral stalk is formed by the delta and b chains.

The protein localises to the cell inner membrane. Its function is as follows. Key component of the proton channel; it plays a direct role in the translocation of protons across the membrane. In Ectopseudomonas mendocina (strain ymp) (Pseudomonas mendocina), this protein is ATP synthase subunit a.